The primary structure comprises 38 residues: Photosystem II reaction center protein L (38 aa).

A helical membrane pass occupies residues 17–37 (SLYWGLLLIFVLAVLFSNYFF).

This sequence belongs to the PsbL family. PSII is composed of 1 copy each of membrane proteins PsbA, PsbB, PsbC, PsbD, PsbE, PsbF, PsbH, PsbI, PsbJ, PsbK, PsbL, PsbM, PsbT, PsbX, PsbY, PsbZ, Psb30/Ycf12, at least 3 peripheral proteins of the oxygen-evolving complex and a large number of cofactors. It forms dimeric complexes.

It localises to the plastid. Its subcellular location is the chloroplast thylakoid membrane. One of the components of the core complex of photosystem II (PSII). PSII is a light-driven water:plastoquinone oxidoreductase that uses light energy to abstract electrons from H(2)O, generating O(2) and a proton gradient subsequently used for ATP formation. It consists of a core antenna complex that captures photons, and an electron transfer chain that converts photonic excitation into a charge separation. This subunit is found at the monomer-monomer interface and is required for correct PSII assembly and/or dimerization. The protein is Photosystem II reaction center protein L of Ananas comosus (Pineapple).